The sequence spans 422 residues: UDP-N-acetylglucosamine 1-carboxyvinyltransferase (422 aa).

22–23 is a phosphoenolpyruvate binding site; the sequence is KN. R93 serves as a coordination point for UDP-N-acetyl-alpha-D-glucosamine. Residue C117 is the Proton donor of the active site. C117 is subject to 2-(S-cysteinyl)pyruvic acid O-phosphothioketal. UDP-N-acetyl-alpha-D-glucosamine contacts are provided by residues 122 to 126, D309, and I331; that span reads RPVDQ.

This sequence belongs to the EPSP synthase family. MurA subfamily.

The protein localises to the cytoplasm. The catalysed reaction is phosphoenolpyruvate + UDP-N-acetyl-alpha-D-glucosamine = UDP-N-acetyl-3-O-(1-carboxyvinyl)-alpha-D-glucosamine + phosphate. The protein operates within cell wall biogenesis; peptidoglycan biosynthesis. Functionally, cell wall formation. Adds enolpyruvyl to UDP-N-acetylglucosamine. This Delftia acidovorans (strain DSM 14801 / SPH-1) protein is UDP-N-acetylglucosamine 1-carboxyvinyltransferase.